Here is a 269-residue protein sequence, read N- to C-terminus: 1-(5-phosphoribosyl)-5-[(5-phosphoribosylamino)methylideneamino] imidazole-4-carboxamide isomerase (269 aa).

Asp-10 functions as the Proton acceptor in the catalytic mechanism. The active-site Proton donor is Asp-132.

The protein belongs to the HisA/HisF family.

It localises to the cytoplasm. It catalyses the reaction 1-(5-phospho-beta-D-ribosyl)-5-[(5-phospho-beta-D-ribosylamino)methylideneamino]imidazole-4-carboxamide = 5-[(5-phospho-1-deoxy-D-ribulos-1-ylimino)methylamino]-1-(5-phospho-beta-D-ribosyl)imidazole-4-carboxamide. The protein operates within amino-acid biosynthesis; L-histidine biosynthesis; L-histidine from 5-phospho-alpha-D-ribose 1-diphosphate: step 4/9. This Xylella fastidiosa (strain Temecula1 / ATCC 700964) protein is 1-(5-phosphoribosyl)-5-[(5-phosphoribosylamino)methylideneamino] imidazole-4-carboxamide isomerase.